We begin with the raw amino-acid sequence, 117 residues long: 16 kDa protein (117 aa).

The sequence is that of 16 kDa protein from Tobacco rattle virus (strain PLB).